Reading from the N-terminus, the 396-residue chain is Chaperone protein DnaJ 1 (396 aa).

In terms of domain architecture, J spans 10–75 (DYYKVLGVPK…KKRKEYDEAR (66 aa)). Over residues 127–137 (LFNRGGAGPGT) the composition is skewed to gly residues. The interval 127–149 (LFNRGGAGPGTGTRTQPRRGQDI) is disordered. The segment at 163-241 (GATVPLRMSS…CKGSGRAKSS (79 aa)) adopts a CR-type zinc-finger fold. Zn(2+) is bound by residues C176, C179, C192, C195, C215, C218, C229, and C232. CXXCXGXG motif repeat units follow at residues 176 to 183 (CKACSGTG), 192 to 199 (CPTCVGTG), 215 to 222 (CPDCKGRG), and 229 to 236 (CEICKGSG).

Belongs to the DnaJ family. Homodimer. The cofactor is Zn(2+).

It localises to the cytoplasm. Participates actively in the response to hyperosmotic and heat shock by preventing the aggregation of stress-denatured proteins and by disaggregating proteins, also in an autonomous, DnaK-independent fashion. Unfolded proteins bind initially to DnaJ; upon interaction with the DnaJ-bound protein, DnaK hydrolyzes its bound ATP, resulting in the formation of a stable complex. GrpE releases ADP from DnaK; ATP binding to DnaK triggers the release of the substrate protein, thus completing the reaction cycle. Several rounds of ATP-dependent interactions between DnaJ, DnaK and GrpE are required for fully efficient folding. Also involved, together with DnaK and GrpE, in the DNA replication of plasmids through activation of initiation proteins. The chain is Chaperone protein DnaJ 1 from Streptomyces avermitilis (strain ATCC 31267 / DSM 46492 / JCM 5070 / NBRC 14893 / NCIMB 12804 / NRRL 8165 / MA-4680).